The chain runs to 228 residues: U1 small nuclear ribonucleoprotein C (228 aa).

A Matrin-type; degenerate zinc finger spans residues 11 to 43; it reads ATVDYCDIFLTHDSASVRKAHNTGWKHKMQVEH. The disordered stretch occupies residues 83 to 127; sequence GQRGQPVGGPPRPPQPFHNGGRPGPPGRPPMGMFPPQRPMMPPPH. A compositionally biased stretch (pro residues) spans 105–127; it reads PGPPGRPPMGMFPPQRPMMPPPH.

This sequence belongs to the U1 small nuclear ribonucleoprotein C family. U1 snRNP is composed of the 7 core Sm proteins B/B', D1, D2, D3, E, F and G that assemble in a heptameric protein ring on the Sm site of the small nuclear RNA to form the core snRNP, and at least 3 U1 snRNP-specific proteins U1-70K, U1-A and U1-C. U1-C interacts with U1 snRNA and the 5' splice-site region of the pre-mRNA.

It is found in the nucleus. Component of the spliceosomal U1 snRNP, which is essential for recognition of the pre-mRNA 5' splice-site and the subsequent assembly of the spliceosome. U1-C is directly involved in initial 5' splice-site recognition for both constitutive and regulated alternative splicing. The interaction with the 5' splice-site seems to precede base-pairing between the pre-mRNA and the U1 snRNA. Stimulates commitment or early (E) complex formation by stabilizing the base pairing of the 5' end of the U1 snRNA and the 5' splice-site region. This chain is U1 small nuclear ribonucleoprotein C, found in Batrachochytrium dendrobatidis (strain JAM81 / FGSC 10211) (Frog chytrid fungus).